A 301-amino-acid polypeptide reads, in one-letter code: N-acetylmuramic acid 6-phosphate etherase (301 aa).

The 161-residue stretch at 55-215 (IADALRAGGR…STISMVALGK (161 aa)) folds into the SIS domain. Glu83 functions as the Proton donor in the catalytic mechanism. Glu111 is a catalytic residue.

This sequence belongs to the GCKR-like family. MurNAc-6-P etherase subfamily. Homodimer.

The catalysed reaction is N-acetyl-D-muramate 6-phosphate + H2O = N-acetyl-D-glucosamine 6-phosphate + (R)-lactate. Its pathway is amino-sugar metabolism; 1,6-anhydro-N-acetylmuramate degradation. The protein operates within amino-sugar metabolism; N-acetylmuramate degradation. It participates in cell wall biogenesis; peptidoglycan recycling. Functionally, specifically catalyzes the cleavage of the D-lactyl ether substituent of MurNAc 6-phosphate, producing GlcNAc 6-phosphate and D-lactate. Together with AnmK, is also required for the utilization of anhydro-N-acetylmuramic acid (anhMurNAc) either imported from the medium or derived from its own cell wall murein, and thus plays a role in cell wall recycling. This chain is N-acetylmuramic acid 6-phosphate etherase, found in Burkholderia lata (strain ATCC 17760 / DSM 23089 / LMG 22485 / NCIMB 9086 / R18194 / 383).